We begin with the raw amino-acid sequence, 109 residues long: Period circadian protein (109 aa).

Residues 29-100 (ITAPVDVDPH…TGTSSGSVQL (72 aa)) form a disordered region. Over residues 69–97 (SGNFNSGSNLHIGSITNTSNTGTGTSSGS) the composition is skewed to low complexity.

As to quaternary structure, forms a heterodimer with timeless (TIM); the complex then translocates into the nucleus. Post-translationally, phosphorylated with a circadian rhythmicity, probably by the double-time protein (dbt). Phosphorylation could be implicated in the stability of per monomer and in the formation of heterodimer per-tim.

Its subcellular location is the nucleus. It is found in the cytoplasm. It localises to the perinuclear region. Essential for biological clock functions. Determines the period length of circadian and ultradian rhythms; an increase in PER dosage leads to shortened circadian rhythms and a decrease leads to lengthened circadian rhythms. Essential for the circadian rhythmicity of locomotor activity, eclosion behavior, and for the rhythmic component of the male courtship song that originates in the thoracic nervous system. The biological cycle depends on the rhythmic formation and nuclear localization of the TIM-PER complex. Light induces the degradation of TIM, which promotes elimination of PER. Nuclear activity of the heterodimer coordinatively regulates PER and TIM transcription through a negative feedback loop. Behaves as a negative element in circadian transcriptional loop. Does not appear to bind DNA, suggesting indirect transcriptional inhibition. The polypeptide is Period circadian protein (per) (Loxocera albiseta (Rust fly)).